A 316-amino-acid chain; its full sequence is MSKLNIIFAGTPDFAAQHLQALLDSEHNVIAVYTQPDKPAGRGKKLQASPVKQLAEQHNIPVYQPKSLRKEDAQAELKALNADVMVVVAYGLILPEAVLNAPKYGCLNVHGSLLPRWRGAAPIQRSIWAGDQETGVTIMQMDIGLDTGDMLHKVTTPIAADETSASLYAKLAELAPPALLEVLNGLESQAFKAEKQDDALSNYAEKLSKEEAKLDWNLTACQLERNIRAFNPWPISFLTLEVDGVEQSVKVYQANVLPHQAKAAGTVLQADKNGIQIATQEGVLNITQLQPSGKKPMSVQDFLNGRADWFAVGKQL.

Serine 112 to proline 115 is a (6S)-5,6,7,8-tetrahydrofolate binding site.

It belongs to the Fmt family.

It carries out the reaction L-methionyl-tRNA(fMet) + (6R)-10-formyltetrahydrofolate = N-formyl-L-methionyl-tRNA(fMet) + (6S)-5,6,7,8-tetrahydrofolate + H(+). In terms of biological role, attaches a formyl group to the free amino group of methionyl-tRNA(fMet). The formyl group appears to play a dual role in the initiator identity of N-formylmethionyl-tRNA by promoting its recognition by IF2 and preventing the misappropriation of this tRNA by the elongation apparatus. The polypeptide is Methionyl-tRNA formyltransferase (Actinobacillus pleuropneumoniae serotype 5b (strain L20)).